We begin with the raw amino-acid sequence, 983 residues long: Bifunctional glutamine synthetase adenylyltransferase/adenylyl-removing enzyme (983 aa).

The segment at 1–468 is adenylyl removase; sequence MTVENAKALF…KQYAALFEQA (468 aa). The segment at 473–983 is adenylyl transferase; it reads AASGNLVFTG…FDKLVGHGAD (511 aa).

It belongs to the GlnE family. The cofactor is Mg(2+).

It carries out the reaction [glutamine synthetase]-O(4)-(5'-adenylyl)-L-tyrosine + phosphate = [glutamine synthetase]-L-tyrosine + ADP. The enzyme catalyses [glutamine synthetase]-L-tyrosine + ATP = [glutamine synthetase]-O(4)-(5'-adenylyl)-L-tyrosine + diphosphate. Involved in the regulation of glutamine synthetase GlnA, a key enzyme in the process to assimilate ammonia. When cellular nitrogen levels are high, the C-terminal adenylyl transferase (AT) inactivates GlnA by covalent transfer of an adenylyl group from ATP to specific tyrosine residue of GlnA, thus reducing its activity. Conversely, when nitrogen levels are low, the N-terminal adenylyl removase (AR) activates GlnA by removing the adenylyl group by phosphorolysis, increasing its activity. The regulatory region of GlnE binds the signal transduction protein PII (GlnB) which indicates the nitrogen status of the cell. In Brucella melitensis biotype 1 (strain ATCC 23456 / CCUG 17765 / NCTC 10094 / 16M), this protein is Bifunctional glutamine synthetase adenylyltransferase/adenylyl-removing enzyme.